A 313-amino-acid polypeptide reads, in one-letter code: Beta-lactamase BRO-1 (313 aa).

The signal sequence occupies residues 1–25; sequence MQRRHFLQKTLLALPIIFSGNLLTG. Cys-26 carries N-palmitoyl cysteine lipidation. A lipid anchor (S-diacylglycerol cysteine) is attached at Cys-26. The active-site Acyl-ester intermediate is the Ser-90. 255 to 257 lines the substrate pocket; that stretch reads KTG.

This sequence belongs to the class-A beta-lactamase family.

Its subcellular location is the cell membrane. The catalysed reaction is a beta-lactam + H2O = a substituted beta-amino acid. The chain is Beta-lactamase BRO-1 (bla) from Moraxella catarrhalis (Branhamella catarrhalis).